A 983-amino-acid polypeptide reads, in one-letter code: Ephrin type-A receptor 3 (983 aa).

Positions 1–20 (MDCHLSILVLLGCCVLSCSG) are cleaved as a signal peptide. Over 21 to 540 (ELSPQPSNEV…SFSISGENSH (520 aa)) the chain is Extracellular. The region spanning 29–206 (EVNLLDSKTI…YFKKCPFTVK (178 aa)) is the Eph LBD domain. N-linked (GlcNAc...) asparagine glycosylation is found at Asn231, Asn336, Asn390, Asn403, and Asn492. Fibronectin type-III domains follow at residues 324-434 (PPSA…TNQA) and 435-530 (APSP…TSPD). Residues 541–564 (VVMIAISAAVAIIVLTVVTYVLVG) traverse the membrane as a helical segment. Topologically, residues 565 to 983 (RFCGYHKSKH…TQSKNGPVPV (419 aa)) are cytoplasmic. 2 positions are modified to phosphotyrosine; by autocatalysis: Tyr596 and Tyr602. A Protein kinase domain is found at 621-882 (ISIDKVVGAG…QIVSILDKLI (262 aa)). Residues 628 to 633 (GAGEFG), Lys653, and 700 to 706 (EYMENGS) contribute to the ATP site. Residue Tyr701 is modified to Phosphotyrosine; by autocatalysis. The Proton acceptor role is filled by Asp746. 750-751 (RN) serves as a coordination point for ATP. Tyr779 is subject to Phosphotyrosine; by autocatalysis. Residues 911 to 975 (ATFHTTGDWL…ISTIKALETQ (65 aa)) enclose the SAM domain. Tyr937 is modified (phosphotyrosine). The PDZ-binding motif lies at 981 to 983 (VPV).

Belongs to the protein kinase superfamily. Tyr protein kinase family. Ephrin receptor subfamily. Heterotetramer upon binding of the ligand. The heterotetramer is composed of an ephrin dimer and a receptor dimer. Oligomerization is probably required to induce biological responses. Forms a ternary EFNA5-EPHA3-ADAM10 complex mediating EFNA5 extracellular domain shedding by ADAM10 which regulates the EFNA5-EPHA3 complex internalization and function. Interacts (phosphorylated) with PTPN1; dephosphorylates EPHA3 and may regulate its trafficking and function. Interacts (phosphorylated) with CRK; mediates EFNA5-EPHA3 signaling through RHOA GTPase activation. Interacts with NCK1 (via SH2 domain); mediates EFNA5-EPHA3 signaling. Autophosphorylates upon activation by EFNA5. Phosphorylation on Tyr-602 mediates interaction with NCK1. Dephosphorylated by PTPN1. In terms of tissue distribution, greatest levels of expression occurring in the brain, also detected in testis. Expressed in myogenic progenitor cells.

It localises to the cell membrane. Its subcellular location is the secreted. The enzyme catalyses L-tyrosyl-[protein] + ATP = O-phospho-L-tyrosyl-[protein] + ADP + H(+). Its function is as follows. Receptor tyrosine kinase which binds promiscuously membrane-bound ephrin family ligands residing on adjacent cells, leading to contact-dependent bidirectional signaling into neighboring cells. The signaling pathway downstream of the receptor is referred to as forward signaling while the signaling pathway downstream of the ephrin ligand is referred to as reverse signaling. Highly promiscuous for ephrin-A ligands it binds preferentially EFNA5. Upon activation by EFNA5 regulates cell-cell adhesion, cytoskeletal organization and cell migration. Plays a role in cardiac cells migration and differentiation and regulates the formation of the atrioventricular canal and septum during development probably through activation by EFNA1. Involved in the retinotectal mapping of neurons. May also control the segregation but not the guidance of motor and sensory axons during neuromuscular circuit development. The chain is Ephrin type-A receptor 3 (Epha3) from Mus musculus (Mouse).